We begin with the raw amino-acid sequence, 167 residues long: Small ribosomal subunit protein uS5 (167 aa).

The region spanning 11–74 (LQEKLIAVNR…EKARRAMINV (64 aa)) is the S5 DRBM domain.

It belongs to the universal ribosomal protein uS5 family. In terms of assembly, part of the 30S ribosomal subunit. Contacts proteins S4 and S8.

Functionally, with S4 and S12 plays an important role in translational accuracy. Its function is as follows. Located at the back of the 30S subunit body where it stabilizes the conformation of the head with respect to the body. The protein is Small ribosomal subunit protein uS5 of Yersinia pseudotuberculosis serotype O:1b (strain IP 31758).